Reading from the N-terminus, the 571-residue chain is Proline--tRNA ligase (571 aa).

It belongs to the class-II aminoacyl-tRNA synthetase family. ProS type 1 subfamily. In terms of assembly, homodimer.

It localises to the cytoplasm. It carries out the reaction tRNA(Pro) + L-proline + ATP = L-prolyl-tRNA(Pro) + AMP + diphosphate. Catalyzes the attachment of proline to tRNA(Pro) in a two-step reaction: proline is first activated by ATP to form Pro-AMP and then transferred to the acceptor end of tRNA(Pro). As ProRS can inadvertently accommodate and process non-cognate amino acids such as alanine and cysteine, to avoid such errors it has two additional distinct editing activities against alanine. One activity is designated as 'pretransfer' editing and involves the tRNA(Pro)-independent hydrolysis of activated Ala-AMP. The other activity is designated 'posttransfer' editing and involves deacylation of mischarged Ala-tRNA(Pro). The misacylated Cys-tRNA(Pro) is not edited by ProRS. This chain is Proline--tRNA ligase, found in Glaesserella parasuis serovar 5 (strain SH0165) (Haemophilus parasuis).